The primary structure comprises 900 residues: Protein translocase subunit SecA (900 aa).

ATP-binding positions include Gln87, 105–109 (GEGKT), and Asp512. The disordered stretch occupies residues 849 to 900 (ERLAQQQQFSHQEEDSLNTGSPAQADRKIGRNDPCPCGSGKKYKQCHGRLQK). Positions 883, 885, 894, and 895 each coordinate Zn(2+). Positions 889–900 (KKYKQCHGRLQK) are enriched in basic residues.

This sequence belongs to the SecA family. Monomer and homodimer. Part of the essential Sec protein translocation apparatus which comprises SecA, SecYEG and auxiliary proteins SecDF-YajC and YidC. Requires Zn(2+) as cofactor.

The protein resides in the cell inner membrane. It localises to the cytoplasm. The enzyme catalyses ATP + H2O + cellular proteinSide 1 = ADP + phosphate + cellular proteinSide 2.. In terms of biological role, part of the Sec protein translocase complex. Interacts with the SecYEG preprotein conducting channel. Has a central role in coupling the hydrolysis of ATP to the transfer of proteins into and across the cell membrane, serving both as a receptor for the preprotein-SecB complex and as an ATP-driven molecular motor driving the stepwise translocation of polypeptide chains across the membrane. The protein is Protein translocase subunit SecA of Pectobacterium atrosepticum (strain SCRI 1043 / ATCC BAA-672) (Erwinia carotovora subsp. atroseptica).